The following is a 393-amino-acid chain: Elongation factor Tu (393 aa).

Positions 10 to 203 constitute a tr-type G domain; sequence KPHVNIGTIG…AVDSYIPQPV (194 aa). The tract at residues 19–26 is G1; that stretch reads GHVDHGKT. Residue 19 to 26 coordinates GTP; that stretch reads GHVDHGKT. Residue T26 coordinates Mg(2+). A G2 region spans residues 60-64; it reads GITIS. Residues 81–84 are G3; the sequence is DCPG. GTP is bound by residues 81 to 85 and 136 to 139; these read DCPGH and NKVD. The interval 136–139 is G4; that stretch reads NKVD. A G5 region spans residues 173-175; the sequence is SAL.

It belongs to the TRAFAC class translation factor GTPase superfamily. Classic translation factor GTPase family. EF-Tu/EF-1A subfamily. Monomer.

The protein localises to the cytoplasm. It carries out the reaction GTP + H2O = GDP + phosphate + H(+). Functionally, GTP hydrolase that promotes the GTP-dependent binding of aminoacyl-tRNA to the A-site of ribosomes during protein biosynthesis. The chain is Elongation factor Tu from Chlorobaculum tepidum (strain ATCC 49652 / DSM 12025 / NBRC 103806 / TLS) (Chlorobium tepidum).